A 228-amino-acid polypeptide reads, in one-letter code: HTH-type transcriptional regulator ArcR (228 aa).

A nucleoside 3',5'-cyclic phosphate is bound at residue 22-141 (SYINIPVGVL…VKLFSLLSET (120 aa)). The region spanning 155-228 (KLAKERVTKI…SKNWLVSKDL (74 aa)) is the HTH crp-type domain. A DNA-binding region (H-T-H motif) is located at residues 188 to 207 (IQLLSDMAGISRETTSHIIN).

The protein localises to the cytoplasm. In terms of biological role, positively regulates the expression of the arcABDCR operon under anaerobic conditions, thus playing an essential role in arginine catabolism. May also control the expression of genes encoding proteins which are involved in anaerobic metabolism. Can bind cyclic AMP. The protein is HTH-type transcriptional regulator ArcR (arcR) of Staphylococcus epidermidis (strain ATCC 12228 / FDA PCI 1200).